The primary structure comprises 264 residues: Shikimate dehydrogenase (NADP(+)) (264 aa).

Shikimate is bound by residues 14-16 and Thr-59; that span reads SLS. Lys-63 functions as the Proton acceptor in the catalytic mechanism. Glu-75 provides a ligand contact to NADP(+). Shikimate-binding residues include Asn-84 and Asp-99. Residues 122 to 126, 144 to 149, and Ile-205 each bind NADP(+); these read GAGGA and NRTPSK. Tyr-207 lines the shikimate pocket. Residue Gly-228 participates in NADP(+) binding.

It belongs to the shikimate dehydrogenase family. As to quaternary structure, homodimer.

The catalysed reaction is shikimate + NADP(+) = 3-dehydroshikimate + NADPH + H(+). It participates in metabolic intermediate biosynthesis; chorismate biosynthesis; chorismate from D-erythrose 4-phosphate and phosphoenolpyruvate: step 4/7. Involved in the biosynthesis of the chorismate, which leads to the biosynthesis of aromatic amino acids. Catalyzes the reversible NADPH linked reduction of 3-dehydroshikimate (DHSA) to yield shikimate (SA). The chain is Shikimate dehydrogenase (NADP(+)) from Pyrococcus abyssi (strain GE5 / Orsay).